Consider the following 147-residue polypeptide: Large ribosomal subunit protein uL16 (147 aa).

It belongs to the universal ribosomal protein uL16 family. In terms of assembly, part of the 50S ribosomal subunit.

Its function is as follows. Binds 23S rRNA and is also seen to make contacts with the A and possibly P site tRNAs. The protein is Large ribosomal subunit protein uL16 of Clostridium botulinum (strain ATCC 19397 / Type A).